A 108-amino-acid chain; its full sequence is Replication restart protein PriB (108 aa).

The 98-residue stretch at 11-108 (INRNQVIISG…VLHVRDTRII (98 aa)) folds into the SSB domain.

The protein belongs to the PriB family. In terms of assembly, homodimer. Interacts with PriA and DnaT. Component of the replication restart primosome. Primosome assembly occurs via a 'hand-off' mechanism. PriA binds to replication forks, subsequently PriB then DnaT bind; DnaT then displaces ssDNA to generate the helicase loading substrate.

Functionally, involved in the restart of stalled replication forks, which reloads the replicative helicase on sites other than the origin of replication; the PriA-PriB pathway is the major replication restart pathway. During primosome assembly it facilitates complex formation between PriA and DnaT on DNA; stabilizes PriA on DNA. Stimulates the DNA unwinding activity of PriA helicase. The chain is Replication restart protein PriB from Nitrosomonas europaea (strain ATCC 19718 / CIP 103999 / KCTC 2705 / NBRC 14298).